The chain runs to 557 residues: Beta-amylase 2, chloroplastic (557 aa).

A chloroplast-targeting transit peptide spans methionine 1–valine 38. The substrate site is built by aspartate 135, histidine 175, and aspartate 183. Glutamate 267 acts as the Proton donor in catalysis. Substrate contacts are provided by lysine 380, histidine 385, and threonine 427. Glutamate 465 functions as the Proton acceptor in the catalytic mechanism. Residues asparagine 466–alanine 467 and arginine 499 contribute to the substrate site.

This sequence belongs to the glycosyl hydrolase 14 family.

It is found in the plastid. Its subcellular location is the chloroplast. It carries out the reaction Hydrolysis of (1-&gt;4)-alpha-D-glucosidic linkages in polysaccharides so as to remove successive maltose units from the non-reducing ends of the chains.. Possesses beta-amylase activity in vitro. May be involved in cold resistance by mediating the accumulation of maltose upon freezing stress, thus contributing to the protection of membranes. The chain is Beta-amylase 2, chloroplastic from Oryza sativa subsp. japonica (Rice).